The following is a 453-amino-acid chain: MSPQTETKAGVGFKAGVKEYKLTYYTPEYETKDTDILAAFRVTPQPGVPPEERGAAVAAESSTGTWTTVWTDGLTSLDRYKGRCYHIEPVPGEEEQFIAYVAYPLDLFEEGSVTNMFTSIVGNVFGFKALRALRLEDLRIPVAYVKTFQGPPHGIQVERDKLNKYGRPLLGCTIKPKLGLSAKNYGRAVYECLRGGLDFTKDDENVNSQPFMRWRDRFLFCAEAIYKSQAETGEIKGHYLNATAGTCEEMIKRAVFARELGVPIVMHDYLTGGFTANTTLSHYCRDNGLLLHIHRAMHAVIDRQKNHGMHFRVLAKALRMSGGDHIHSGTVVGKLEGERDITLGFVDLLRDDYIEKDRSRGIYFTQDWVSLPGVLPVASRGIHVWHMPALTEIFGDDSVLQFGGGTLGHPWGNAPGAVANRVALEACVKARNEGRDLASEGGEIIREACKWSP.

The propeptide occupies 1–2; sequence MS. An N-acetylproline modification is found at Pro-3. At Lys-14 the chain carries N6,N6,N6-trimethyllysine. Asn-123 and Thr-173 together coordinate substrate. Lys-175 acts as the Proton acceptor in catalysis. Lys-177 is a substrate binding site. Mg(2+) is bound by residues Lys-201, Asp-203, and Glu-204. Lys-201 bears the N6-carboxylysine mark. Residue His-294 is the Proton acceptor of the active site. Substrate contacts are provided by Arg-295, His-327, and Ser-379.

It belongs to the RuBisCO large chain family. Type I subfamily. As to quaternary structure, heterohexadecamer of 8 large chains and 8 small chains; disulfide-linked. The disulfide link is formed within the large subunit homodimers. The cofactor is Mg(2+). The disulfide bond which can form in the large chain dimeric partners within the hexadecamer appears to be associated with oxidative stress and protein turnover.

The protein localises to the plastid. Its subcellular location is the chloroplast. It carries out the reaction 2 (2R)-3-phosphoglycerate + 2 H(+) = D-ribulose 1,5-bisphosphate + CO2 + H2O. The enzyme catalyses D-ribulose 1,5-bisphosphate + O2 = 2-phosphoglycolate + (2R)-3-phosphoglycerate + 2 H(+). In terms of biological role, ruBisCO catalyzes two reactions: the carboxylation of D-ribulose 1,5-bisphosphate, the primary event in carbon dioxide fixation, as well as the oxidative fragmentation of the pentose substrate in the photorespiration process. Both reactions occur simultaneously and in competition at the same active site. The sequence is that of Ribulose bisphosphate carboxylase large chain from Galium parisiense (Wall bedstraw).